The chain runs to 459 residues: uncharacterized protein (459 aa).

The region spanning Lys-6–Arg-64 is the TRAM domain. Positions 289, 318, 339, and 387 each coordinate S-adenosyl-L-methionine. Cys-414 serves as the catalytic Nucleophile.

This sequence belongs to the class I-like SAM-binding methyltransferase superfamily. RNA M5U methyltransferase family.

This is an uncharacterized protein from Lactobacillus johnsonii (strain CNCM I-12250 / La1 / NCC 533).